The primary structure comprises 590 residues: Glutamine--fructose-6-phosphate aminotransferase [isomerizing] (590 aa).

Cysteine 2 acts as the Nucleophile; for GATase activity in catalysis. The region spanning 2 to 219 (CGIVACILKD…DGEMVILDGD (218 aa)) is the Glutamine amidotransferase type-2 domain. SIS domains lie at 277–415 (VVEE…PELM) and 438–580 (LAAT…PDKP). Residue lysine 585 is the For Fru-6P isomerization activity of the active site.

In terms of assembly, homodimer.

The protein resides in the cytoplasm. It catalyses the reaction D-fructose 6-phosphate + L-glutamine = D-glucosamine 6-phosphate + L-glutamate. Its function is as follows. Catalyzes the first step in hexosamine metabolism, converting fructose-6P into glucosamine-6P using glutamine as a nitrogen source. In Methanothermobacter thermautotrophicus (strain ATCC 29096 / DSM 1053 / JCM 10044 / NBRC 100330 / Delta H) (Methanobacterium thermoautotrophicum), this protein is Glutamine--fructose-6-phosphate aminotransferase [isomerizing].